The sequence spans 132 residues: Small ribosomal subunit protein uS8 (132 aa).

The protein belongs to the universal ribosomal protein uS8 family. As to quaternary structure, part of the 30S ribosomal subunit. Contacts proteins S5 and S12.

Functionally, one of the primary rRNA binding proteins, it binds directly to 16S rRNA central domain where it helps coordinate assembly of the platform of the 30S subunit. The protein is Small ribosomal subunit protein uS8 of Rhodococcus jostii (strain RHA1).